A 425-amino-acid polypeptide reads, in one-letter code: Inositol hexakisphosphate kinase 2 (425 aa).

Residues 206–208 (ENL) and Asp-219 contribute to the ATP site. Substrate contacts are provided by residues 215–223 (PCVLDLKMG), Lys-221, and 235–242 (KAANQIRK). Asp-382 contacts ATP. His-385 contributes to the substrate binding site.

This sequence belongs to the inositol phosphokinase (IPK) family. Highly expressed in small intestine.

The protein localises to the nucleus. It catalyses the reaction 1D-myo-inositol hexakisphosphate + ATP = 5-diphospho-1D-myo-inositol 1,2,3,4,6-pentakisphosphate + ADP. It participates in phospholipid metabolism; phosphatidylinositol metabolism. Its function is as follows. Converts inositol hexakisphosphate (InsP6) to diphosphoinositol pentakisphosphate (InsP7/PP-InsP5). This is Inositol hexakisphosphate kinase 2 (Ip6k2) from Rattus norvegicus (Rat).